Reading from the N-terminus, the 504-residue chain is Tachykinin-like peptides receptor 86C (504 aa).

The Extracellular segment spans residues 1–84 (MSEIVDTELL…PYELPWEQKT (84 aa)). Residues Asn-12, Asn-28, and Asn-36 are each glycosylated (N-linked (GlcNAc...) asparagine). Residues 85–108 (IWAIIFGLMMFVAIAGNGIVLWIV) form a helical membrane-spanning segment. Topologically, residues 109–118 (TGHRSMRTVT) are cytoplasmic. The helical transmembrane segment at 119-143 (NYFLLNLSIADLLMSSLNCVFNFIF) threads the bilayer. The Extracellular segment spans residues 144-155 (MLNSDWPFGSIY). The helical transmembrane segment at 156–179 (CTINNFVANVTVSTSVFTLVAISF) threads the bilayer. The Cytoplasmic portion of the chain corresponds to 180–199 (DRYIAIVHPLKRRTSRRKVR). The chain crosses the membrane as a helical span at residues 200 to 224 (IILVLIWALSCVLSAPCLLYSSIMT). Residues 225–250 (KHYYNGKSRTVCFMMWPDGRYPTSMA) are Extracellular-facing. Residues 251-275 (DYAYNLIILVLTYGIPMIVMLICYS) form a helical membrane-spanning segment. The Cytoplasmic segment spans residues 276–308 (LMGRVLWGSRSIGENTDRQMESMKSKRKVVRMF). Residues 309-330 (IAIVSIFAICWLPYHLFFIYAY) traverse the membrane as a helical segment. The Extracellular segment spans residues 331-343 (HNNQVASTKYVQH). The chain crosses the membrane as a helical span at residues 344-367 (MYLGFYWLAMSNAMVNPLIYYWMN). Topologically, residues 368-504 (KRFRMYFQRI…NPVELSPKQM (137 aa)) are cytoplasmic. Positions 393–450 (PKSRLTNKNSSNRHTRAETKSQWKRSTMETQIQQAPVTSSCREQRSAQQQQPPGSGTN) are disordered. Composition is skewed to polar residues over residues 395-404 (SRLTNKNSSN) and 416-450 (KRST…SGTN).

Belongs to the G-protein coupled receptor 1 family. As to expression, expressed in central nervous system, as well as in subsets of neurons in each segment of the developing ventral ganglia.

Its subcellular location is the cell membrane. Functionally, receptor for tachykinin-like peptides. In Drosophila melanogaster (Fruit fly), this protein is Tachykinin-like peptides receptor 86C (TkR86C).